A 308-amino-acid chain; its full sequence is Regulating synaptic membrane exocytosis protein 3 (308 aa).

The segment at 86–120 (STETGIAVEMRSRVTRQGSRESTDGSTNSNSSDGT) is disordered. The span at 109 to 120 (DGSTNSNSSDGT) shows a compositional bias: low complexity. In terms of domain architecture, C2 spans 156–274 (PMGDVHIAIM…DLSAAVTGWY (119 aa)). Phosphoserine is present on residues serine 295 and serine 298.

Binds PPFIA3. Does not bind RAB3.

It localises to the synapse. In terms of biological role, regulates synaptic membrane exocytosis. The polypeptide is Regulating synaptic membrane exocytosis protein 3 (RIMS3) (Homo sapiens (Human)).